The sequence spans 1007 residues: Rho-type GTPase-activating protein 1 (1007 aa).

2 LIM zinc-binding domains span residues cysteine 13–cysteine 66 and cysteine 70–cysteine 122. 3 disordered regions span residues isoleucine 203 to serine 293, glutamate 401 to leucine 478, and lysine 505 to serine 600. Residues asparagine 212–asparagine 221 show a composition bias toward low complexity. 2 stretches are compositionally biased toward polar residues: residues alanine 250–threonine 261 and histidine 270–serine 293. A Phosphothreonine modification is found at threonine 278. Serine 291 is subject to Phosphoserine. Residues lysine 411–arginine 421 show a composition bias toward basic residues. Over residues arginine 454–threonine 466 the composition is skewed to basic and acidic residues. Composition is skewed to polar residues over residues glycine 467–leucine 478 and serine 529–serine 579. At threonine 532 the chain carries Phosphothreonine. Basic and acidic residues predominate over residues glutamate 583 to serine 600. A Rho-GAP domain is found at serine 791–leucine 1006.

Functionally, GTPase-activating protein (GAP) for CDC42 and/or RHO1. Negative regulator of the pheromone-response pathway through the STE20 protein kinase; acts at a step between the G-protein and the MAP kinase module. Dominant suppressor of bud emergence defect caused by deletion of IPL2/BEM2. Involved in the control of polarized cell growth and proper bud site selection. This is Rho-type GTPase-activating protein 1 (RGA1) from Saccharomyces cerevisiae (strain ATCC 204508 / S288c) (Baker's yeast).